The primary structure comprises 167 residues: Small ribosomal subunit protein uS9 (167 aa).

Disordered stretches follow at residues 1 to 45 (MSEY…GGAT) and 137 to 167 (KAGFLTRDPRATERKKAGLKKARKAPQFSKR). The span at 9-19 (DTVEDITESDE) shows a compositional bias: acidic residues. Residues 20–36 (FTGTYTSESSTPATGGN) are compositionally biased toward polar residues. The span at 143–152 (RDPRATERKK) shows a compositional bias: basic and acidic residues. Residues 153–167 (AGLKKARKAPQFSKR) show a composition bias toward basic residues.

The protein belongs to the universal ribosomal protein uS9 family.

This is Small ribosomal subunit protein uS9 from Kineococcus radiotolerans (strain ATCC BAA-149 / DSM 14245 / SRS30216).